The following is a 394-amino-acid chain: Aspergillopepsin-1 (394 aa).

An N-terminal signal peptide occupies residues 1-20 (MVVFSKTAALVLGLSTAVSA). A propeptide spans 21-69 (APAPTRKGFTINQIARPANKTRTVNLPGLYARSLAKFGGTVPQSVKEAA) (activation peptide). The region spanning 85 to 391 (YLTPVTVGKS…NSEGPKLGFA (307 aa)) is the Peptidase A1 domain. Active-site residues include D101 and D283. A disulfide bridge connects residues C319 and C354.

This sequence belongs to the peptidase A1 family.

The protein localises to the secreted. The catalysed reaction is Hydrolysis of proteins with broad specificity. Generally favors hydrophobic residues in P1 and P1', but also accepts Lys in P1, which leads to activation of trypsinogen. Does not clot milk.. Secreted aspartic endopeptidase that allows assimilation of proteinaceous substrates. The scissile peptide bond is attacked by a nucleophilic water molecule activated by two aspartic residues in the active site. Shows a broad primary substrate specificity. Favors hydrophobic residues at the P1 and P1' positions, but also accepts a lysine residue in the P1 position, leading to the activation of trypsinogen and chymotrypsinogen A. The chain is Aspergillopepsin-1 from Aspergillus niger.